Consider the following 185-residue polypeptide: Large ribosomal subunit protein uL5 (185 aa).

This sequence belongs to the universal ribosomal protein uL5 family. As to quaternary structure, part of the 50S ribosomal subunit; part of the 5S rRNA/L5/L18/L25 subcomplex. Contacts the 5S rRNA and the P site tRNA. Forms a bridge to the 30S subunit in the 70S ribosome.

Its function is as follows. This is one of the proteins that bind and probably mediate the attachment of the 5S RNA into the large ribosomal subunit, where it forms part of the central protuberance. In the 70S ribosome it contacts protein S13 of the 30S subunit (bridge B1b), connecting the 2 subunits; this bridge is implicated in subunit movement. Contacts the P site tRNA; the 5S rRNA and some of its associated proteins might help stabilize positioning of ribosome-bound tRNAs. This is Large ribosomal subunit protein uL5 from Rhizobium leguminosarum bv. trifolii (strain WSM2304).